Here is a 128-residue protein sequence, read N- to C-terminus: MQRHMLKSKIHRAAVTHCELHYEGSCAIDEDLLEAANIVENERIDIWNINNGERFSTYAIKGERGSGMISLNGSAARRAQLGDLVIIAAFAMIDEEELKAGWKPDLVFVDEGNKIKGSRDHVPTQNWT.

S25 functions as the Schiff-base intermediate with substrate; via pyruvic acid in the catalytic mechanism. Pyruvic acid (Ser) is present on S25. T57 is a binding site for substrate. The active-site Proton donor is Y58. Residue 73-75 (GSA) participates in substrate binding.

This sequence belongs to the PanD family. As to quaternary structure, heterooctamer of four alpha and four beta subunits. It depends on pyruvate as a cofactor. In terms of processing, is synthesized initially as an inactive proenzyme, which is activated by self-cleavage at a specific serine bond to produce a beta-subunit with a hydroxyl group at its C-terminus and an alpha-subunit with a pyruvoyl group at its N-terminus.

The protein resides in the cytoplasm. The catalysed reaction is L-aspartate + H(+) = beta-alanine + CO2. Its pathway is cofactor biosynthesis; (R)-pantothenate biosynthesis; beta-alanine from L-aspartate: step 1/1. Functionally, catalyzes the pyruvoyl-dependent decarboxylation of aspartate to produce beta-alanine. This chain is Aspartate 1-decarboxylase, found in Burkholderia thailandensis (strain ATCC 700388 / DSM 13276 / CCUG 48851 / CIP 106301 / E264).